The primary structure comprises 562 residues: NAD-dependent malic enzyme (562 aa).

The active-site Proton donor is the Tyr101. NAD(+) is bound at residue Arg154. Catalysis depends on Lys172, which acts as the Proton acceptor. 3 residues coordinate a divalent metal cation: Glu243, Asp244, and Asp267. Residues Asp267 and Asn415 each contribute to the NAD(+) site.

This sequence belongs to the malic enzymes family. In terms of assembly, homotetramer. The cofactor is Mg(2+). Mn(2+) serves as cofactor.

It catalyses the reaction (S)-malate + NAD(+) = pyruvate + CO2 + NADH. The catalysed reaction is oxaloacetate + H(+) = pyruvate + CO2. In Shewanella denitrificans (strain OS217 / ATCC BAA-1090 / DSM 15013), this protein is NAD-dependent malic enzyme.